Here is a 704-residue protein sequence, read N- to C-terminus: MATCSSSLLVLPNLRLSSNQRRNFKVRAQISGENKKATSLEPVNNNGSVSLSTTVQNQKGANEVNGKGKSKRKIVSDEIELLWDDGYGSKSVKDYFAAAKEILKADGGPPRWFSPVDCGRPVEDAPTLLFLPGMDGTGMGLVPHHKALGKAFHVSCLHIPVLDRTPFEGLLKVVEDVLRQEQATRPNKPIYLVGDSFGGCLALAVAARNRSLDLVLILVNPATSFDRSPLQPLLPILEMVPEELHFTVPYALSFIMGDPIKMATLGIDNQLPTGVKIEKLRQRLTKTMLPLLSELGGIIPRETLLWKLKLLRSGCAYANSRIHAVQAEVLVLASGKDMMLPSQEEAKRLHGLLKNCSVRCFKDNGHTLLLEDSISLLTVIKGTGKYRRSWRYDLVSDFLPPSKGELAYALDEVLGFLRNAVGSVFFSTMEDGKIVKGLAGVPDKGPVLLVGYHMLMGLELGPMSEAFIKEKNILFRGMAHPVLYSDNDPAKAFDYGDWIKVFGAYPVTATNLFKLLDSKSHVLLFPGGAREALHNRGEQYKLIWPEQQEFVRMAARFGATIVPFGTVGEDDIAELVLDYNDLMKIPILNDYITEVTRDTKQFKLREESEGEVANQPLYLPGLIPKVPGRFYYLFGKPIETKGRPELVKDKEEANQVYLEVKAEVENSIAYLLKKREEDPYRSVLDRLNYSLTHTTATHVPSFEP.

The N-terminal 27 residues, 1-27 (MATCSSSLLVLPNLRLSSNQRRNFKVR), are a transit peptide targeting the chloroplast.

Belongs to the diacylglycerol acyltransferase family. As to quaternary structure, interacts with PGM48. Mostly expressed in flowers (e.g. sepals, petals and stamen).

The protein resides in the plastid. The protein localises to the chloroplast. It is found in the plastoglobule. It catalyses the reaction a 1,2-diacyl-3-O-(beta-D-galactosyl)-sn-glycerol + a 1,2-diacylglycerol = an acyl-3-O-(beta-D-galactosyl)-sn-glycerol + a triacylglycerol. It carries out the reaction a 1,2-diacylglycerol + a fatty acyl-CoA = a triacylglycerol + CoA. The enzyme catalyses a fatty acyl-[ACP] + a 1,2-diacylglycerol = a triacylglycerol + holo-[ACP]. The catalysed reaction is phytol + a fatty acyl-CoA = a fatty acid phytyl ester + CoA. It catalyses the reaction phytol + tetradecanoyl-CoA = tetradecanoate phytyl ester + CoA. It carries out the reaction a 1,3-diacylglycerol + a fatty acyl-CoA = a triacylglycerol + CoA. The enzyme catalyses 1,2-dihexanoylglycerol + tetradecanoyl-CoA = 1,2-dihexanoyl-3-tetradecanoylglycerol + CoA. The catalysed reaction is 1,2-dihexanoylglycerol + hexadecanoyl-CoA = 1,2-dihexanoyl-3-hexadecanoylglycerol + CoA. It catalyses the reaction 1,2-dihexanoylglycerol + octadecanoyl-CoA = 1,2-dihexanoyl-3-octadecanoylglycerol + CoA. It carries out the reaction (7Z,10Z,13Z)-hexadecatrienoyl-CoA + 1,2-dihexanoylglycerol = 1,2-dihexanoyl-3-(7Z,10Z,13Z-hexadecatrienoyl)-glycerol + CoA. The enzyme catalyses 1,2-dihexanoylglycerol + (9Z)-octadecenoyl-CoA = 1,2-dihexanoyl-3-(9Z-octadecenoyl)-glycerol + CoA. The catalysed reaction is 1,2-dihexanoylglycerol + (9Z,12Z,15Z)-octadecatrienoyl-CoA = 1,2-dihexanoyl-3-(9Z,12Z,15Z-octadecatrienoyl)-glycerol + CoA. It catalyses the reaction phytol + decanoyl-CoA = decanoate phytyl ester + CoA. It carries out the reaction (7Z,10Z,13Z)-hexadecatrienoyl-CoA + phytol = (7Z,10Z,13Z)-hexadecatrienoate phytyl ester + CoA. The enzyme catalyses phytol + dodecanoyl-CoA = dodecanoate phytyl ester + CoA. Its function is as follows. Acyltransferase involved in fatty acid phytyl ester synthesis in chloroplasts, a process required for the maintenance of the photosynthetic membrane integrity during abiotic stress and senescence. Exhibits phytyl ester synthesis and diacylglycerol acyltransferase activities with broad substrate specificities, and can employ acyl-CoAs, acyl carrier proteins, and galactolipids as acyl donors. This is Phytyl ester synthase 1, chloroplastic from Arabidopsis thaliana (Mouse-ear cress).